The following is a 1581-amino-acid chain: Rho guanine nucleotide exchange factor 5 (1581 aa).

6 disordered regions span residues 25-54 (EGIMRSSQIPALDPEAQEDRDPSYKWTDGH), 159-274 (VSKE…EQKQ), 316-643 (LRDS…RDGI), 659-700 (SEEF…PPTV), 741-810 (HSHP…PEFY), and 829-1051 (VPII…GSSD). Residues 41-54 (QEDRDPSYKWTDGH) show a composition bias toward basic and acidic residues. Residues 204–221 (KQLQLEATQENQGQEGFL) show a composition bias toward polar residues. Over residues 228-241 (GLEEQEGQEVEIQE) the composition is skewed to acidic residues. Composition is skewed to basic and acidic residues over residues 326 to 336 (QESREVEERRV) and 345 to 380 (RLVEKSEIVKRKQRDHDQTGKVMPVRDQKEVVDSGD). Phosphoserine is present on Ser446. Over residues 474–492 (LDNRTHNSQQEEFRLRKGI) the composition is skewed to basic and acidic residues. The span at 496–507 (SASTSVAPSGTR) shows a compositional bias: polar residues. Residues 515–531 (PNVFSSTATLSPVSSSV) show a composition bias toward low complexity. 5 stretches are compositionally biased toward polar residues: residues 569–595 (TSDTANPHSPLSSYTGVTQHLRSNSFP), 603–613 (TPDSLGMSLSF), 662–685 (FTSNPERPSSPHGSPTWGSPQNSA), 748–760 (TLSSGLHRSSKGS), and 779–791 (TPESPNHTQTSIP). Residues 829 to 843 (VPIIDPSSEPPPLPP) are compositionally biased toward pro residues. Composition is skewed to polar residues over residues 867 to 881 (PNNQDWTASTLSVGR), 889 to 905 (GRSTESLPLTSRCNNEV), and 912 to 925 (SNMTNLLSPSSPTT). Phosphoserine occurs at positions 953 and 969. Basic and acidic residues predominate over residues 975–986 (KNSEKPLHHQLE). Ser1029 and Ser1110 each carry phosphoserine. One can recognise a DH domain in the interval 1158–1342 (KLQEAKFELI…EKLIRDCNSN (185 aa)). Positions 1375-1488 (LVKSGELTAL…SALAMPREEL (114 aa)) constitute a PH domain. The SH3 domain occupies 1494 to 1555 (YDSPQVQCLR…PVQQVEFISN (62 aa)).

As to quaternary structure, interacts with SRC. Forms a ternary complex with SRC and the PI3K 85 kDa subunit. Interacts with and is activated by the heterodimer formed by GNB1 and GNG2. Interacts with ODAM (via C-terminus). Interacts with RHOA. In terms of processing, activation of SRC induces tyrosine phosphorylation of ARHGEF5.

It localises to the nucleus. Its subcellular location is the cytoplasm. It is found in the cell projection. The protein resides in the podosome. In terms of biological role, guanine nucleotide exchange factor which activates Rho GTPases. Strongly activates RHOA. Also strongly activates RHOB, weakly activates RHOC and RHOG and shows no effect on RHOD, RHOV, RHOQ or RAC1. Involved in regulation of cell shape and actin cytoskeletal organization. Plays a role in actin organization by generating a loss of actin stress fibers and the formation of membrane ruffles and filopodia. Required for SRC-induced podosome formation. Involved in positive regulation of immature dendritic cell migration. The protein is Rho guanine nucleotide exchange factor 5 of Mus musculus (Mouse).